The chain runs to 293 residues: 33 kDa chaperonin (293 aa).

Intrachain disulfides connect cysteine 230–cysteine 232 and cysteine 263–cysteine 266.

The protein belongs to the HSP33 family. In terms of processing, under oxidizing conditions two disulfide bonds are formed involving the reactive cysteines. Under reducing conditions zinc is bound to the reactive cysteines and the protein is inactive.

It localises to the cytoplasm. Its function is as follows. Redox regulated molecular chaperone. Protects both thermally unfolding and oxidatively damaged proteins from irreversible aggregation. Plays an important role in the bacterial defense system toward oxidative stress. The sequence is that of 33 kDa chaperonin from Edwardsiella ictaluri (strain 93-146).